The following is a 246-amino-acid chain: Pyridoxine 5'-phosphate synthase (246 aa).

Asn12 contacts 3-amino-2-oxopropyl phosphate. 14-15 contributes to the 1-deoxy-D-xylulose 5-phosphate binding site; the sequence is DH. Residue Arg23 participates in 3-amino-2-oxopropyl phosphate binding. His48 acts as the Proton acceptor in catalysis. Positions 50 and 55 each coordinate 1-deoxy-D-xylulose 5-phosphate. The active-site Proton acceptor is Glu75. 1-deoxy-D-xylulose 5-phosphate is bound at residue Thr105. Residue His196 is the Proton donor of the active site. 3-amino-2-oxopropyl phosphate-binding positions include Gly197 and 218–219; that span reads GH.

This sequence belongs to the PNP synthase family. As to quaternary structure, homooctamer; tetramer of dimers.

Its subcellular location is the cytoplasm. The enzyme catalyses 3-amino-2-oxopropyl phosphate + 1-deoxy-D-xylulose 5-phosphate = pyridoxine 5'-phosphate + phosphate + 2 H2O + H(+). It participates in cofactor biosynthesis; pyridoxine 5'-phosphate biosynthesis; pyridoxine 5'-phosphate from D-erythrose 4-phosphate: step 5/5. Catalyzes the complicated ring closure reaction between the two acyclic compounds 1-deoxy-D-xylulose-5-phosphate (DXP) and 3-amino-2-oxopropyl phosphate (1-amino-acetone-3-phosphate or AAP) to form pyridoxine 5'-phosphate (PNP) and inorganic phosphate. This chain is Pyridoxine 5'-phosphate synthase, found in Thiobacillus denitrificans (strain ATCC 25259 / T1).